The sequence spans 101 residues: UPF0473 protein STER_1939 (101 aa).

This sequence belongs to the UPF0473 family.

In Streptococcus thermophilus (strain ATCC BAA-491 / LMD-9), this protein is UPF0473 protein STER_1939.